A 296-amino-acid chain; its full sequence is ATP phosphoribosyltransferase (296 aa).

Belongs to the ATP phosphoribosyltransferase family. Long subfamily. Mg(2+) serves as cofactor.

It is found in the cytoplasm. The enzyme catalyses 1-(5-phospho-beta-D-ribosyl)-ATP + diphosphate = 5-phospho-alpha-D-ribose 1-diphosphate + ATP. It participates in amino-acid biosynthesis; L-histidine biosynthesis; L-histidine from 5-phospho-alpha-D-ribose 1-diphosphate: step 1/9. With respect to regulation, feedback inhibited by histidine. Its function is as follows. Catalyzes the condensation of ATP and 5-phosphoribose 1-diphosphate to form N'-(5'-phosphoribosyl)-ATP (PR-ATP). Has a crucial role in the pathway because the rate of histidine biosynthesis seems to be controlled primarily by regulation of HisG enzymatic activity. In Halorubrum lacusprofundi (strain ATCC 49239 / DSM 5036 / JCM 8891 / ACAM 34), this protein is ATP phosphoribosyltransferase.